Here is a 270-residue protein sequence, read N- to C-terminus: Undecaprenyl-diphosphatase 3 (270 aa).

Transmembrane regions (helical) follow at residues 5-25, 42-62, 89-109, 117-137, 192-212, 220-240, and 250-270; these read YYILKYLILGLFQGLTEPIPI, IEGFSFELLVNSASLLAVLLI, FFFIIYLVIATIPAGVIGVLF, LKGVKMVGISLLITAVGLWII, FSFLLYIPVSLGGLLLSITDI, TLFVPYIVAFIATFIMTYISL, and GNLKYFSFYCIIVGVLTLIFL.

Belongs to the UppP family.

It is found in the cell membrane. The catalysed reaction is di-trans,octa-cis-undecaprenyl diphosphate + H2O = di-trans,octa-cis-undecaprenyl phosphate + phosphate + H(+). In terms of biological role, catalyzes the dephosphorylation of undecaprenyl diphosphate (UPP). Confers resistance to bacitracin. This chain is Undecaprenyl-diphosphatase 3, found in Bacillus anthracis.